The sequence spans 314 residues: 2-desacetyl-2-hydroxyethyl bacteriochlorophyllide A dehydrogenase (314 aa).

The protein operates within porphyrin-containing compound metabolism; bacteriochlorophyll biosynthesis (light-independent). This protein catalyzes the penultimate step in bacteriochlorophyll a biosynthesis. The protein is 2-desacetyl-2-hydroxyethyl bacteriochlorophyllide A dehydrogenase (bchC) of Rhodobacter capsulatus (strain ATCC BAA-309 / NBRC 16581 / SB1003).